Here is a 497-residue protein sequence, read N- to C-terminus: Serine/arginine-rich protein PSR (497 aa).

An N-terminal signal peptide occupies residues 1 to 19 (MYSRCIALVFVGLLASSLA). Residues 20-366 (ANCYGPAGKL…HHGLSSQKLG (347 aa)) are Extracellular-facing. N-linked (GlcNAc...) asparagine glycans are attached at residues asparagine 92, asparagine 193, asparagine 202, asparagine 261, and asparagine 283. A helical membrane pass occupies residues 367–387 (LAIGLPIAGVFLIILIAAAII). Topologically, residues 388–497 (YYRKRRESEK…ESASRDSDSD (110 aa)) are cytoplasmic. The segment at 424–450 (MGSKTMQAMLDMRDDDESEHDSDDGYG) is necessary for phosphorylation by PSRPK in vitro. A compositionally biased stretch (acidic residues) spans 436–447 (RDDDESEHDSDD). The interval 436 to 497 (RDDDESEHDS…ESASRDSDSD (62 aa)) is disordered. A compositionally biased stretch (basic residues) spans 459–471 (GRSRSRSRSRSVS). Basic and acidic residues predominate over residues 476 to 497 (GSRDARSESDPGESASRDSDSD).

Post-translationally, phosphorylated on serine residues in the RS domain by PSRPK.

It is found in the membrane. The protein is Serine/arginine-rich protein PSR of Physarum polycephalum (Slime mold).